The sequence spans 323 residues: Ribose-phosphate pyrophosphokinase (323 aa).

Residues 38 to 40 (DGE) and 96 to 97 (RQ) each bind ATP. Positions 130 and 170 each coordinate Mg(2+). The active site involves Lys-193. D-ribose 5-phosphate is bound by residues Arg-195, Asp-219, and 223–227 (DTAGT).

This sequence belongs to the ribose-phosphate pyrophosphokinase family. Class I subfamily. In terms of assembly, homohexamer. Requires Mg(2+) as cofactor.

The protein localises to the cytoplasm. It catalyses the reaction D-ribose 5-phosphate + ATP = 5-phospho-alpha-D-ribose 1-diphosphate + AMP + H(+). It participates in metabolic intermediate biosynthesis; 5-phospho-alpha-D-ribose 1-diphosphate biosynthesis; 5-phospho-alpha-D-ribose 1-diphosphate from D-ribose 5-phosphate (route I): step 1/1. Its function is as follows. Involved in the biosynthesis of the central metabolite phospho-alpha-D-ribosyl-1-pyrophosphate (PRPP) via the transfer of pyrophosphoryl group from ATP to 1-hydroxyl of ribose-5-phosphate (Rib-5-P). The polypeptide is Ribose-phosphate pyrophosphokinase (Chlorobaculum tepidum (strain ATCC 49652 / DSM 12025 / NBRC 103806 / TLS) (Chlorobium tepidum)).